The sequence spans 409 residues: Multidrug resistance protein MdtG (409 aa).

10 helical membrane-spanning segments follow: residues 16–36, 58–78, 92–112, 115–135, 146–166, 173–193, 224–244, 256–276, 291–311, and 379–399; these read LIVA…VMPF, IVFS…GGLA, LGMG…QFLI, ALLG…ATQV, TLST…GLLA, PVFF…LFCI, LFVT…ILTL, VAFI…LLSA, ILIT…YVQT, and AVFL…WNSL.

This sequence belongs to the major facilitator superfamily. DHA1 family. MdtG (TC 2.A.1.2.20) subfamily.

It is found in the cell inner membrane. Functionally, confers resistance to fosfomycin and deoxycholate. The polypeptide is Multidrug resistance protein MdtG (Escherichia coli O9:H4 (strain HS)).